The following is a 103-amino-acid chain: ATP-dependent Clp protease adapter protein ClpS 1 (103 aa).

This sequence belongs to the ClpS family. As to quaternary structure, binds to the N-terminal domain of the chaperone ClpA.

Its function is as follows. Involved in the modulation of the specificity of the ClpAP-mediated ATP-dependent protein degradation. The chain is ATP-dependent Clp protease adapter protein ClpS 1 from Rhodopseudomonas palustris (strain ATCC BAA-98 / CGA009).